The following is a 938-amino-acid chain: Phosphoenolpyruvate carboxylase (938 aa).

Residues H151 and K591 contribute to the active site.

The protein belongs to the PEPCase type 1 family. Requires Mg(2+) as cofactor.

It carries out the reaction oxaloacetate + phosphate = phosphoenolpyruvate + hydrogencarbonate. Functionally, forms oxaloacetate, a four-carbon dicarboxylic acid source for the tricarboxylic acid cycle. This chain is Phosphoenolpyruvate carboxylase, found in Roseiflexus castenholzii (strain DSM 13941 / HLO8).